Reading from the N-terminus, the 399-residue chain is Protein HYM1 (399 aa).

A compositionally biased stretch (low complexity) spans 363–382 (VSNNNASSSNVASITSPSSV). Residues 363-399 (VSNNNASSSNVASITSPSSVMNNQSSILTHSTSPDSR) form a disordered region. The segment covering 383–399 (MNNQSSILTHSTSPDSR) has biased composition (polar residues).

It belongs to the Mo25 family.

The sequence is that of Protein HYM1 (HYM1) from Saccharomyces cerevisiae (strain ATCC 204508 / S288c) (Baker's yeast).